Reading from the N-terminus, the 168-residue chain is MGYLGMPFRVGMGFDVHRFTESREEGQYIPICGIKVAHTQGIVAHSDGDVALHALTDALLGCMGEGSIGQHFPNSDPQWKNASSSYFLLEAQKKAAAKSYAILNFDVTIVCEQPKIMPHVPKMKEFLSKLLDVDVSQMNIKAVTTEKLGFLGRGEGIAAHAVLMCYRV.

A divalent metal cation is bound by residues Asp-15 and His-17. 4-CDP-2-C-methyl-D-erythritol 2-phosphate-binding positions include 15–17 (DVH) and 45–46 (HS). An a divalent metal cation-binding site is contributed by His-53. Residues 72–76 (FPNSD), Phe-150, and Arg-153 each bind 4-CDP-2-C-methyl-D-erythritol 2-phosphate.

Belongs to the IspF family. As to quaternary structure, homotrimer. The cofactor is a divalent metal cation.

It catalyses the reaction 4-CDP-2-C-methyl-D-erythritol 2-phosphate = 2-C-methyl-D-erythritol 2,4-cyclic diphosphate + CMP. It functions in the pathway isoprenoid biosynthesis; isopentenyl diphosphate biosynthesis via DXP pathway; isopentenyl diphosphate from 1-deoxy-D-xylulose 5-phosphate: step 4/6. Its function is as follows. Involved in the biosynthesis of isopentenyl diphosphate (IPP) and dimethylallyl diphosphate (DMAPP), two major building blocks of isoprenoid compounds. Catalyzes the conversion of 4-diphosphocytidyl-2-C-methyl-D-erythritol 2-phosphate (CDP-ME2P) to 2-C-methyl-D-erythritol 2,4-cyclodiphosphate (ME-CPP) with a corresponding release of cytidine 5-monophosphate (CMP). The sequence is that of 2-C-methyl-D-erythritol 2,4-cyclodiphosphate synthase from Anaplasma phagocytophilum (strain HZ).